We begin with the raw amino-acid sequence, 139 residues long: MSTDLFPQAHSKHDLERGFALAPRFNADGLVVAVAQHADTGEILMLAWMNAEALKLTVETQIAHYFSRSRNELWKKGDTSGQLQDVVELRVDCDQDAVLLKVRPRGDGGACHVGFRSCFYRVLENGVLVEREAPLHDHA.

Position 92 (aspartate 92) interacts with Mg(2+). Residue cysteine 93 participates in Zn(2+) binding. Positions 94 and 96 each coordinate Mg(2+). The Zn(2+) site is built by cysteine 111 and cysteine 118.

This sequence belongs to the PRA-CH family. Homodimer. Mg(2+) is required as a cofactor. It depends on Zn(2+) as a cofactor.

The protein localises to the cytoplasm. The enzyme catalyses 1-(5-phospho-beta-D-ribosyl)-5'-AMP + H2O = 1-(5-phospho-beta-D-ribosyl)-5-[(5-phospho-beta-D-ribosylamino)methylideneamino]imidazole-4-carboxamide. It functions in the pathway amino-acid biosynthesis; L-histidine biosynthesis; L-histidine from 5-phospho-alpha-D-ribose 1-diphosphate: step 3/9. Catalyzes the hydrolysis of the adenine ring of phosphoribosyl-AMP. The chain is Phosphoribosyl-AMP cyclohydrolase from Caulobacter vibrioides (strain ATCC 19089 / CIP 103742 / CB 15) (Caulobacter crescentus).